The chain runs to 196 residues: Glutathione-specific gamma-glutamylcyclotransferase 1 (196 aa).

15 to 20 (IFGYGS) is a binding site for substrate. The active-site Proton acceptor is the Glu95.

The protein belongs to the gamma-glutamylcyclotransferase family. ChaC subfamily.

It localises to the cytoplasm. The protein localises to the cytosol. It is found in the golgi apparatus. Its subcellular location is the trans-Golgi network. The catalysed reaction is glutathione = L-cysteinylglycine + 5-oxo-L-proline. Functionally, catalyzes the cleavage of glutathione into 5-oxo-L-proline and a Cys-Gly dipeptide. Acts specifically on glutathione, but not on other gamma-glutamyl peptides. Glutathione depletion is an important factor for apoptosis initiation and execution. Acts as a pro-apoptotic component of the unfolded protein response pathway by mediating the pro-apoptotic effects of the ATF4-ATF3-DDIT3/CHOP cascade. Negative regulator of Notch signaling pathway involved in embryonic neurogenesis: acts by inhibiting Notch cleavage by furin, maintaining Notch in an immature inactive form, thereby promoting neurogenesis in embryos. The sequence is that of Glutathione-specific gamma-glutamylcyclotransferase 1 from Danio rerio (Zebrafish).